The chain runs to 171 residues: MTNFTFDGAHSSLEFQIKHLMVSKVKGSFDQFDVAVEGDINDFSTLKATATIIPSSINTKNDARDNHLKSGDFFGTDEFDKITFETKSVTENKVVGDLTIKGITNEETFDVEFNGVSKNPMDGSQVTGIIVTGTINREKYGINFNQALETGGVMLGKDVKFEASAEFSISE.

Belongs to the UPF0312 family.

The sequence is that of UPF0312 protein SAB2563 from Staphylococcus aureus (strain bovine RF122 / ET3-1).